Consider the following 301-residue polypeptide: Probable alpha-L-glutamate ligase (301 aa).

The 184-residue stretch at 104 to 287 folds into the ATP-grasp domain; the sequence is MQLLSRKGIG…VAGLIVDFIE (184 aa). ATP-binding positions include Lys-141, 178-179, Asp-187, and 211-213; these read EF and RSN. Mg(2+)-binding residues include Asp-248, Glu-260, and Asn-262. Positions 248, 260, and 262 each coordinate Mn(2+).

The protein belongs to the RimK family. Mg(2+) serves as cofactor. The cofactor is Mn(2+).

This is Probable alpha-L-glutamate ligase from Aliivibrio salmonicida (strain LFI1238) (Vibrio salmonicida (strain LFI1238)).